Consider the following 337-residue polypeptide: MAVEMFYDADADLSIIQGRKVAVIGYGSQGHAHSLSLRDSGVQVKVGLKEGSKSREKVTEQGLEVDTPAEVAKWADVIMLLAPDTAQAEIFTNDIEPNLEDGNALFFGHGLNIHFGLIKPPANVTIGMVAPKGPGHLVRRQFVDGKGVPCLIAIDQDPKGEGQALALSYAAAIGGARAGVIKTTFKEETETDLFGEQAVLCGGTEELVKTGFEVMVEAGYAPEMAYFEVLHELKLIVDLMYEGGIARMNYSVSDTAEFGGYLSGPRVIDADTKKRMQDILKDIQDGTFVKRLVANVEGGNKELEALRKKNAEHPIEVTGKKLRDLMSWVDRPITETA.

The region spanning 3–183 is the KARI N-terminal Rossmann domain; that stretch reads VEMFYDADAD…GGARAGVIKT (181 aa). NADP(+) contacts are provided by residues 26 to 29, lysine 49, serine 52, serine 54, and 84 to 87; these read YGSQ and DTAQ. Residue histidine 109 is part of the active site. Glycine 135 lines the NADP(+) pocket. The KARI C-terminal knotted domain occupies 184–329; that stretch reads TFKEETETDL…KKLRDLMSWV (146 aa). Positions 192, 196, 228, and 232 each coordinate Mg(2+). Serine 253 contacts substrate.

This sequence belongs to the ketol-acid reductoisomerase family. Requires Mg(2+) as cofactor.

The catalysed reaction is (2R)-2,3-dihydroxy-3-methylbutanoate + NADP(+) = (2S)-2-acetolactate + NADPH + H(+). It catalyses the reaction (2R,3R)-2,3-dihydroxy-3-methylpentanoate + NADP(+) = (S)-2-ethyl-2-hydroxy-3-oxobutanoate + NADPH + H(+). Its pathway is amino-acid biosynthesis; L-isoleucine biosynthesis; L-isoleucine from 2-oxobutanoate: step 2/4. It participates in amino-acid biosynthesis; L-valine biosynthesis; L-valine from pyruvate: step 2/4. In terms of biological role, involved in the biosynthesis of branched-chain amino acids (BCAA). Catalyzes an alkyl-migration followed by a ketol-acid reduction of (S)-2-acetolactate (S2AL) to yield (R)-2,3-dihydroxy-isovalerate. In the isomerase reaction, S2AL is rearranged via a Mg-dependent methyl migration to produce 3-hydroxy-3-methyl-2-ketobutyrate (HMKB). In the reductase reaction, this 2-ketoacid undergoes a metal-dependent reduction by NADPH to yield (R)-2,3-dihydroxy-isovalerate. This chain is Ketol-acid reductoisomerase (NADP(+)), found in Mycolicibacterium vanbaalenii (strain DSM 7251 / JCM 13017 / BCRC 16820 / KCTC 9966 / NRRL B-24157 / PYR-1) (Mycobacterium vanbaalenii).